A 757-amino-acid polypeptide reads, in one-letter code: uncharacterized protein (757 aa).

The region spanning 640 to 709 (GMILEGVVSN…ARKRIALTMR (70 aa)) is the S1 motif domain. The span at 710 to 741 (LDDEPGGAKHKMPSENRSRERTAGRKPQRNDR) shows a compositional bias: basic and acidic residues. The segment at 710–757 (LDDEPGGAKHKMPSENRSRERTAGRKPQRNDRAPANSAMADAFAKLKR) is disordered.

This is an uncharacterized protein from Neisseria meningitidis serogroup A / serotype 4A (strain DSM 15465 / Z2491).